A 387-amino-acid polypeptide reads, in one-letter code: Succinate--CoA ligase [ADP-forming] subunit beta (387 aa).

ATP is bound by residues Lys-46, 53–55 (GRG), Glu-99, Cys-102, and Glu-107. Mg(2+)-binding residues include Asn-196 and Asp-210. Residues Asn-261 and 318–320 (GIV) each bind substrate.

Belongs to the succinate/malate CoA ligase beta subunit family. As to quaternary structure, heterotetramer of two alpha and two beta subunits. Mg(2+) serves as cofactor.

It carries out the reaction succinate + ATP + CoA = succinyl-CoA + ADP + phosphate. The catalysed reaction is GTP + succinate + CoA = succinyl-CoA + GDP + phosphate. Its pathway is carbohydrate metabolism; tricarboxylic acid cycle; succinate from succinyl-CoA (ligase route): step 1/1. In terms of biological role, succinyl-CoA synthetase functions in the citric acid cycle (TCA), coupling the hydrolysis of succinyl-CoA to the synthesis of either ATP or GTP and thus represents the only step of substrate-level phosphorylation in the TCA. The beta subunit provides nucleotide specificity of the enzyme and binds the substrate succinate, while the binding sites for coenzyme A and phosphate are found in the alpha subunit. This chain is Succinate--CoA ligase [ADP-forming] subunit beta, found in Campylobacter hominis (strain ATCC BAA-381 / DSM 21671 / CCUG 45161 / LMG 19568 / NCTC 13146 / CH001A).